The primary structure comprises 262 residues: Phosphate import ATP-binding protein PstB (262 aa).

Positions 16 to 257 (MEARHLSVRY…PSEQRTEDYV (242 aa)) constitute an ABC transporter domain. 48 to 55 (GPSGCGKS) serves as a coordination point for ATP.

It belongs to the ABC transporter superfamily. Phosphate importer (TC 3.A.1.7) family. In terms of assembly, the complex is composed of two ATP-binding proteins (PstB), two transmembrane proteins (PstC and PstA) and a solute-binding protein (PstS).

It localises to the cell inner membrane. It catalyses the reaction phosphate(out) + ATP + H2O = ADP + 2 phosphate(in) + H(+). Functionally, part of the ABC transporter complex PstSACB involved in phosphate import. Responsible for energy coupling to the transport system. In Anaeromyxobacter dehalogenans (strain 2CP-C), this protein is Phosphate import ATP-binding protein PstB.